The sequence spans 597 residues: Gigaxonin (597 aa).

In terms of domain architecture, BTB spans 30-99 (CDAHLVLDGE…IFSGQIRLNE (70 aa)). A BACK domain is found at 134 to 236 (CIGIRDFALH…DSSYLREQML (103 aa)). Kelch repeat units lie at residues 274–326 (CIVT…SAEG), 327–374 (FLFV…EIDG), 376–421 (LYIL…AMKK), 422–468 (KIYA…GVAM), 470–522 (LYVF…VYGA), and 528–574 (SIYV…AALR).

In terms of assembly, interacts with TBCB. Interacts with CUL3. Part of a complex that contains CUL3, RBX1 and GAN. Interacts (via BTB domain) with UBA1. Interacts (via Kelch domains) with MAP1B (via C-terminus) and MAP1S (via C-terminus). In terms of processing, ubiquitinated by E3 ubiquitin ligase complex formed by CUL3 and RBX1 and probably targeted for proteasome-independent degradation. As to expression, expressed in brain, heart and muscle.

Its subcellular location is the cytoplasm. The protein resides in the cytoskeleton. It participates in protein modification; protein ubiquitination. Functionally, probable cytoskeletal component that directly or indirectly plays an important role in neurofilament architecture. May act as a substrate-specific adapter of an E3 ubiquitin-protein ligase complex which mediates the ubiquitination and subsequent proteasomal degradation of target proteins. Controls degradation of TBCB. Controls degradation of MAP1B and MAP1S, and is critical for neuronal maintenance and survival. The chain is Gigaxonin (GAN) from Homo sapiens (Human).